The chain runs to 324 residues: ATP-dependent 6-phosphofructokinase (324 aa).

An ATP-binding site is contributed by glycine 11. Arginine 21–arginine 25 provides a ligand contact to ADP. Residues arginine 72–glutamate 73 and glycine 102–serine 105 contribute to the ATP site. Asparagine 103 serves as a coordination point for Mg(2+). Threonine 126–aspartate 128 is a binding site for substrate. The active-site Proton acceptor is the aspartate 128. Lysine 155 contributes to the ADP binding site. Substrate contacts are provided by residues arginine 163 and methionine 170–arginine 172. Residues glycine 186–glutamate 188 and lysine 214–phenylalanine 216 contribute to the ADP site. Substrate-binding positions include glutamate 223, arginine 248, and tyrosine 254 to arginine 257.

This sequence belongs to the phosphofructokinase type A (PFKA) family. ATP-dependent PFK group I subfamily. Prokaryotic clade 'B1' sub-subfamily. As to quaternary structure, homotetramer. It depends on Mg(2+) as a cofactor.

The protein resides in the cytoplasm. The enzyme catalyses beta-D-fructose 6-phosphate + ATP = beta-D-fructose 1,6-bisphosphate + ADP + H(+). It functions in the pathway carbohydrate degradation; glycolysis; D-glyceraldehyde 3-phosphate and glycerone phosphate from D-glucose: step 3/4. With respect to regulation, allosterically activated by ADP and other diphosphonucleosides, and allosterically inhibited by phosphoenolpyruvate. In terms of biological role, catalyzes the phosphorylation of D-fructose 6-phosphate to fructose 1,6-bisphosphate by ATP, the first committing step of glycolysis. In Sulfurihydrogenibium sp. (strain YO3AOP1), this protein is ATP-dependent 6-phosphofructokinase.